An 839-amino-acid polypeptide reads, in one-letter code: Valine--tRNA ligase (839 aa).

The short motif at 41-51 (PNVTGKLHIGH) is the 'HIGH' region element. Residues 315–343 (RENIVLKLKKENLIDKIENIKSNIIMSER) are a coiled coil. Residues 517–521 (KMSKS) carry the 'KMSKS' region motif. An ATP-binding site is contributed by lysine 520. Residues 813 to 839 (INNASEIKVKEEKEKLEKYIKEFEEIK) are a coiled coil.

It belongs to the class-I aminoacyl-tRNA synthetase family. ValS type 1 subfamily. Monomer.

The protein resides in the cytoplasm. The enzyme catalyses tRNA(Val) + L-valine + ATP = L-valyl-tRNA(Val) + AMP + diphosphate. Functionally, catalyzes the attachment of valine to tRNA(Val). As ValRS can inadvertently accommodate and process structurally similar amino acids such as threonine, to avoid such errors, it has a 'posttransfer' editing activity that hydrolyzes mischarged Thr-tRNA(Val) in a tRNA-dependent manner. In Mycoplasma mobile (strain ATCC 43663 / 163K / NCTC 11711) (Mesomycoplasma mobile), this protein is Valine--tRNA ligase.